The following is a 321-amino-acid chain: uncharacterized protein (321 aa).

The Exonuclease domain maps to 130 to 314 (NLVYDLETTG…NDVDALIKIM (185 aa)).

This is an uncharacterized protein from Acanthamoeba polyphaga (Amoeba).